The following is a 332-amino-acid chain: Adenosine receptor A2b (332 aa).

Residues 1-8 are Extracellular-facing; it reads MQLETQDA. A helical membrane pass occupies residues 9–33; that stretch reads LYVALELVIAALAVAGNVLVCAAVG. Topologically, residues 34 to 43 are cytoplasmic; that stretch reads ASSALQTPTN. A helical transmembrane segment spans residues 44–67; the sequence is YFLVSLATADVAVGLFAIPFAITI. Residues 68–78 are Extracellular-facing; sequence SLGFCTDFHSC. The cysteines at positions 78 and 171 are disulfide-linked. A helical transmembrane segment spans residues 79-101; the sequence is LFLACFVLVLTQSSIFSLLAVAV. Topologically, residues 102–121 are cytoplasmic; it reads DRYLAIRVPLRYKGLVTGTR. The chain crosses the membrane as a helical span at residues 122–144; that stretch reads ARGIIAVLWVLAFGIGLTPFLGW. Topologically, residues 145–178 are extracellular; it reads NSKDRATSNCTEPGDGITNKSCCPVKCLFENVVP. Residues N153 and N163 are each glycosylated (N-linked (GlcNAc...) asparagine). An adenosine-binding site is contributed by E174. Residues 179–203 traverse the membrane as a helical segment; the sequence is MSYMVYFNFFGCVLPPLLIMMVIYI. Over 204–235 the chain is Cytoplasmic; that stretch reads KIFMVACKQLQHMELMEHSRTTLQREIHAAKS. The chain crosses the membrane as a helical span at residues 236 to 259; sequence LAMIVGIFALCWLPVHAINCITLF. N254 provides a ligand contact to adenosine. The Extracellular portion of the chain corresponds to 260-267; the sequence is HPALAKDK. The helical transmembrane segment at 268–291 threads the bilayer; it reads PKWVMNVAILLSHANSVVNPIVYA. S279 and H280 together coordinate adenosine. Residues 292-332 are Cytoplasmic-facing; the sequence is YRNRDFRYSFHRIISRYVLCQTDTKGGSGQAGGQSTFSLSL. C311 carries the S-palmitoyl cysteine lipid modification.

Belongs to the G-protein coupled receptor 1 family.

The protein localises to the cell membrane. In terms of biological role, receptor for adenosine. The activity of this receptor is mediated by G proteins which activate adenylyl cyclase. The polypeptide is Adenosine receptor A2b (Adora2b) (Rattus norvegicus (Rat)).